The chain runs to 158 residues: Pyruvoyl-dependent arginine decarboxylase (158 aa).

A Pyruvic acid (Ser) modification is found at Ser-44.

This sequence belongs to the PdaD family. Requires pyruvate as cofactor.

It carries out the reaction L-arginine + H(+) = agmatine + CO2. The sequence is that of Pyruvoyl-dependent arginine decarboxylase from Thermococcus sibiricus (strain DSM 12597 / MM 739).